The following is a 214-amino-acid chain: uncharacterized protein (214 aa).

2 helical membrane-spanning segments follow: residues 23 to 43 (ILVGACAAVWLVFTGVSVAAA) and 65 to 85 (VLYAVIVVSALVIVGAIPVLL). The disordered stretch occupies residues 96–115 (ATRPTGASVRGGRSIGSGHP). A run of 2 helical transmembrane segments spans residues 152 to 172 (VVLTSAIGIALIAVAAATYLM) and 181 to 201 (WISYGLAGVVTAGMPVIEWLY).

It is found in the cell membrane. This is an uncharacterized protein from Mycobacterium tuberculosis (strain CDC 1551 / Oshkosh).